Reading from the N-terminus, the 160-residue chain is Putative pre-16S rRNA nuclease (160 aa).

The protein belongs to the YqgF nuclease family.

It localises to the cytoplasm. Its function is as follows. Could be a nuclease involved in processing of the 5'-end of pre-16S rRNA. The chain is Putative pre-16S rRNA nuclease from Cereibacter sphaeroides (strain ATCC 17029 / ATH 2.4.9) (Rhodobacter sphaeroides).